A 291-amino-acid polypeptide reads, in one-letter code: 33 kDa chaperonin (291 aa).

2 disulfide bridges follow: Cys229-Cys231 and Cys262-Cys265.

It belongs to the HSP33 family. Under oxidizing conditions two disulfide bonds are formed involving the reactive cysteines. Under reducing conditions zinc is bound to the reactive cysteines and the protein is inactive.

Its subcellular location is the cytoplasm. Functionally, redox regulated molecular chaperone. Protects both thermally unfolding and oxidatively damaged proteins from irreversible aggregation. Plays an important role in the bacterial defense system toward oxidative stress. The protein is 33 kDa chaperonin of Aliivibrio salmonicida (strain LFI1238) (Vibrio salmonicida (strain LFI1238)).